Reading from the N-terminus, the 131-residue chain is Profilin (131 aa).

Belongs to the profilin family. As to quaternary structure, occurs in many kinds of cells as a complex with monomeric actin in a 1:1 ratio.

The protein localises to the cytoplasm. The protein resides in the cytoskeleton. Its function is as follows. Binds to actin and affects the structure of the cytoskeleton. At high concentrations, profilin prevents the polymerization of actin, whereas it enhances it at low concentrations. By binding to PIP2, it inhibits the formation of IP3 and DG. This chain is Profilin, found in Prunus avium (Cherry).